The chain runs to 940 residues: Fibronectin-binding protein B (940 aa).

Residues 1-36 (MKSNLRYGIRKHKLGAASVFLGTMIVVGMGQEKEAA) form the signal peptide. The interval 36–111 (AASEQNNTTV…PKVETSRVDL (76 aa)) is disordered. Residues 38 to 92 (SEQNNTTVEESGSSATESKASETQTTTNNVNTIDETQSYSATSTEQPSQSTQVTT) show a composition bias toward polar residues. The interval 162-480 (TGTDVTNKVE…AQGDGKDKLK (319 aa)) is fibrinogen/elastin/tropoelastin-binding. Disordered stretches follow at residues 676–746 (LGYE…NIID), 764–878 (IIEE…GKVV), and 892–918 (VPTK…NGML). A D-1 repeat occupies 681–718 (GQNSGNQSFEEDTEEDKPKYEQGGNIVDIDFDSVPQIH). The stretch at 719 to 756 (GQNNGNQSFEEDTEKDKPKYEQGGNIIDIDFDSVPHIH) is one D-2 repeat. The D-3 repeat unit spans residues 757-795 (GFNKHTEIIEEDTNKDKPNYQFGGHNSVDFEEDTLPQVS). Residues 764–774 (IIEEDTNKDKP) are compositionally biased toward basic and acidic residues. The span at 792-802 (PQVSGHNEGQQ) shows a compositional bias: polar residues. The D-4; truncated repeat unit spans residues 796-814 (GHNEGQQTIEEDTTPPIVP). A compositionally biased stretch (pro residues) spans 811–860 (PIVPPTPPTPEVPSEPETPTPPTPEVPSEPETPTPPTPEVPTEPGKPIPP). 3 WR repeats span residues 815–828 (PTPP…EPET), 829–842 (PTPP…EPET), and 857–870 (PIPP…KPSK). An LPXTG sorting signal motif is present at residues 904–908 (LPETG). Position 907 is a pentaglycyl murein peptidoglycan amidated threonine (Thr907). A propeptide spans 908-940 (GGEESTNNGMLFGGLFSILGLALLRRNKKNHKA) (removed by sortase).

In terms of assembly, interacts with host PLG; this interaction provides active plasmin on the surface of bacteria cells. Interacts with host histones.

It is found in the secreted. It localises to the cell wall. Functionally, multifunctional protein which promotes bacterial attachment to fibrinogen, elastin and fibronectin. Also promotes the accumulation phase and the primary attachment phase of biofilm formation. In addition, protects against the antimicrobial activity of histones. Mechanistically, captures histones and prevents them from reaching the bacterial membrane and simultaneously binds plasminogen, thereby promoting its conversion to plasmin to destroy the bound histones. This Staphylococcus aureus (strain USA300) protein is Fibronectin-binding protein B.